Here is a 419-residue protein sequence, read N- to C-terminus: L-rhamnose isomerase (419 aa).

The Mn(2+) site is built by H262, D294, and D296.

This sequence belongs to the rhamnose isomerase family. In terms of assembly, homotetramer. Requires Mn(2+) as cofactor.

It is found in the cytoplasm. The catalysed reaction is L-rhamnopyranose = L-rhamnulose. It participates in carbohydrate degradation; L-rhamnose degradation; glycerone phosphate from L-rhamnose: step 1/3. Its function is as follows. Catalyzes the interconversion of L-rhamnose and L-rhamnulose. This is L-rhamnose isomerase from Shigella flexneri serotype 5b (strain 8401).